Here is a 668-residue protein sequence, read N- to C-terminus: Fe(2+) transporter FeoB (668 aa).

A FeoB-type G domain is found at 3–165 (SYEIALIGNP…KKAISIAVKD (163 aa)). 10-17 (GNPNVGKS) serves as a coordination point for GTP. Mg(2+)-binding residues include N21, A22, T24, and G25. Residues 35–39 (GVTVE), 56–59 (DLPG), 116–119 (NKMD), and 145–147 (SAA) each bind GTP. Helical transmembrane passes span 344–364 (VGAV…ISFL), 386–406 (LPGK…PAIM), 418–438 (ILTI…IYAL), 450–470 (VVIL…AFLF), 515–535 (IIVF…SGYL), 574–594 (ALVF…MLYG), 613–633 (AYAF…LAVI), and 643–663 (LFAV…ISVI).

It belongs to the TRAFAC class TrmE-Era-EngA-EngB-Septin-like GTPase superfamily. FeoB GTPase (TC 9.A.8) family. In terms of assembly, the crystallized N-terminal domain is a homodimer.

The protein localises to the cell membrane. Probable transporter of a GTP-driven Fe(2+) uptake system, might be able to transport Fe(2+) into or out of the cell. The chain is Fe(2+) transporter FeoB from Methanocaldococcus jannaschii (strain ATCC 43067 / DSM 2661 / JAL-1 / JCM 10045 / NBRC 100440) (Methanococcus jannaschii).